The sequence spans 56 residues: Large ribosomal subunit protein bL33 (56 aa).

Belongs to the bacterial ribosomal protein bL33 family.

This chain is Large ribosomal subunit protein bL33, found in Anaplasma marginale (strain Florida).